The following is a 317-amino-acid chain: Phospho-N-acetylmuramoyl-pentapeptide-transferase (317 aa).

The next 9 membrane-spanning stretches (helical) occupy residues 6-26 (IVMAIVISFIVASILGPIIIP), 52-72 (PTIGGLIFIFATIITMFIMVG), 78-98 (AMIALYSFVGFGFVGFLDDLL), 114-134 (MILLLIVSGFLTWYAYKYIGT), 145-165 (INFGLFYIPFVMFYFAGVTNA), 171-191 (GLDGLATSVTVLVTTFLGIIS), 194-214 (LGHISLAIFCVALAGALLAFL), 223-244 (VFMGDTGSLALGGAVAMVALIL), and 297-317 (KIVSVFSIITVVFCFIAFASL).

It belongs to the glycosyltransferase 4 family. MraY subfamily. Mg(2+) is required as a cofactor.

Its subcellular location is the cell membrane. The catalysed reaction is UDP-N-acetyl-alpha-D-muramoyl-L-alanyl-gamma-D-glutamyl-meso-2,6-diaminopimeloyl-D-alanyl-D-alanine + di-trans,octa-cis-undecaprenyl phosphate = di-trans,octa-cis-undecaprenyl diphospho-N-acetyl-alpha-D-muramoyl-L-alanyl-D-glutamyl-meso-2,6-diaminopimeloyl-D-alanyl-D-alanine + UMP. It participates in cell wall biogenesis; peptidoglycan biosynthesis. Its function is as follows. Catalyzes the initial step of the lipid cycle reactions in the biosynthesis of the cell wall peptidoglycan: transfers peptidoglycan precursor phospho-MurNAc-pentapeptide from UDP-MurNAc-pentapeptide onto the lipid carrier undecaprenyl phosphate, yielding undecaprenyl-pyrophosphoryl-MurNAc-pentapeptide, known as lipid I. The polypeptide is Phospho-N-acetylmuramoyl-pentapeptide-transferase (Clostridium perfringens (strain 13 / Type A)).